Consider the following 458-residue polypeptide: D-inositol 3-phosphate glycosyltransferase (458 aa).

Residues 1 to 29 (MRADRPGHRSRGINPGPGMFTLVGPDERD) form a disordered region. Histidine 47 contacts 1D-myo-inositol 3-phosphate. UDP-N-acetyl-alpha-D-glucosamine is bound by residues 53–54 (QP) and glycine 61. 1D-myo-inositol 3-phosphate is bound by residues 58–63 (DAGGMN), lysine 116, tyrosine 149, threonine 173, and arginine 193. UDP-N-acetyl-alpha-D-glucosamine-binding residues include arginine 267, lysine 272, and valine 339. Alanine 351 contributes to the Mg(2+) binding site. Residues glutamate 361 and glutamate 369 each coordinate UDP-N-acetyl-alpha-D-glucosamine. A Mg(2+)-binding site is contributed by threonine 375.

Belongs to the glycosyltransferase group 1 family. MshA subfamily. Homodimer.

The enzyme catalyses 1D-myo-inositol 3-phosphate + UDP-N-acetyl-alpha-D-glucosamine = 1D-myo-inositol 2-acetamido-2-deoxy-alpha-D-glucopyranoside 3-phosphate + UDP + H(+). In terms of biological role, catalyzes the transfer of a N-acetyl-glucosamine moiety to 1D-myo-inositol 3-phosphate to produce 1D-myo-inositol 2-acetamido-2-deoxy-glucopyranoside 3-phosphate in the mycothiol biosynthesis pathway. This is D-inositol 3-phosphate glycosyltransferase from Nocardioides sp. (strain ATCC BAA-499 / JS614).